The following is a 3563-amino-acid chain: D-lysergyl-peptide-synthetase subunit 1 (3563 aa).

The segment at 307-706 (SCSPRPNPQA…LGRKDDQVKI (400 aa)) is adenylation (A) domain 1. One can recognise a Carrier 1 domain in the interval 844–921 (EPKSDREKLL…EIVIVSTSAT (78 aa)). O-(pantetheine 4'-phosphoryl)serine is present on Ser881. The tract at residues 963–1354 (EDIYPCTHLQ…EHILTEIHSN (392 aa)) is condensation (C) domain 1. An adenylation (A) domain 2 region spans residues 1397 to 1804 (QEKCQAQPDA…RRKDAQVKIR (408 aa)). The Carrier 2 domain occupies 1944–2020 (PPSNATEHEI…KLALARGVTQ (77 aa)). Ser1981 bears the O-(pantetheine 4'-phosphoryl)serine mark. Residues 2067 to 2486 (ERIYPCSPIQ…ALPVLDEDQM (420 aa)) form a condensation (C) domain 2 region. The tract at residues 2511-2909 (QCIRCPDSPS…GRNDDQVKVR (399 aa)) is adenylation (A) domain 3. Residues 3025 to 3104 (PPRTALEAEL…RFGSYRRAGA (80 aa)) form the Carrier 3 domain. Position 3064 is an O-(pantetheine 4'-phosphoryl)serine (Ser3064). The tract at residues 3166-3451 (LYFSKPMASE…VAKSTTWSSD (286 aa)) is cyclization (Cyc) domain.

The protein belongs to the NRP synthetase family.

It participates in alkaloid biosynthesis; ergot alkaloid biosynthesis. D-lysergyl-peptide-synthetase subunit 1; part of the gene cluster that mediates the biosynthesis of fungal ergot alkaloid. DmaW catalyzes the first step of ergot alkaloid biosynthesis by condensing dimethylallyl diphosphate (DMAP) and tryptophan to form 4-dimethylallyl-L-tryptophan. The second step is catalyzed by the methyltransferase easF that methylates 4-dimethylallyl-L-tryptophan in the presence of S-adenosyl-L-methionine, resulting in the formation of 4-dimethylallyl-L-abrine. The catalase easC and the FAD-dependent oxidoreductase easE then transform 4-dimethylallyl-L-abrine to chanoclavine-I which is further oxidized by easD in the presence of NAD(+), resulting in the formation of chanoclavine-I aldehyde. Agroclavine dehydrogenase easG then mediates the conversion of chanoclavine-I aldehyde to agroclavine via a non-enzymatic adduct reaction: the substrate is an iminium intermediate that is formed spontaneously from chanoclavine-I aldehyde in the presence of glutathione. The presence of easA is not required to complete this reaction. Further conversion of agroclavine to paspalic acid is a two-step process involving oxidation of agroclavine to elymoclavine and of elymoclavine to paspalic acid, the second step being performed by the elymoclavine oxidase cloA. Paspalic acid is then further converted to D-lysergic acid. Ergopeptines are assembled from D-lysergic acid and three different amino acids by the D-lysergyl-peptide-synthetases composed each of a monomudular and a trimodular nonribosomal peptide synthetase subunit. LpsB and lpsC encode the monomodular subunits responsible for D-lysergic acid activation and incorporation into the ergopeptine backbone. LpsA1 and A2 subunits encode the trimodular nonribosomal peptide synthetase assembling the tripeptide portion of ergopeptines. LpsA1 is responsible for formation of the major ergopeptine, ergotamine, and lpsA2 for alpha-ergocryptine, the minor ergopeptine of the total alkaloid mixture elaborated by C.purpurea. D-lysergyl-tripeptides are assembled by the nonribosomal peptide synthetases and released as N-(D-lysergyl-aminoacyl)-lactams. Cyclolization of the D-lysergyl-tripeptides is performed by the Fe(2+)/2-ketoglutarate-dependent dioxygenase easH which introduces a hydroxyl group into N-(D-lysergyl-aminoacyl)-lactam at alpha-C of the aminoacyl residue followed by spontaneous condensation with the terminal lactam carbonyl group. The polypeptide is D-lysergyl-peptide-synthetase subunit 1 (Claviceps purpurea (Ergot fungus)).